We begin with the raw amino-acid sequence, 354 residues long: UDP-2,3-diacetamido-2,3-dideoxy-D-glucuronate 2-epimerase (354 aa).

The protein belongs to the UDP-N-acetylglucosamine 2-epimerase family.

It catalyses the reaction UDP-2,3-diacetamido-2,3-dideoxy-alpha-D-glucuronate = UDP-2,3-diacetamido-2,3-dideoxy-alpha-D-mannuronate. It participates in bacterial outer membrane biogenesis; LPS O-antigen biosynthesis. Its function is as follows. Plays a role in the biosynthesis of B-band O antigen for serotype O5. Catalyzes the epimerization of UDP-2,3-diacetamido-2,3-dideoxy-alpha-D-glucuronic acid (UDP-alpha-D-GlcNAc3NAcA) to UDP-2,3-diacetamido-2,3-dideoxy-alpha-D-mannuronic acid (UDP-alpha-D-ManNAc3NAcA). Exhibits high specificity towards the substrate as UDP-alpha-D-GlcNAc, UDP-alpha-D-GlcNAcA (UDP-2-acetamido-2-deoxy-alpha-D-glucuronic acid) and UDP-alpha-D-GlcNAc3NAc (UDP-2,3-diacetamido-2,3-dideoxy-alpha-D-glucose) cannot act as substrates. The protein is UDP-2,3-diacetamido-2,3-dideoxy-D-glucuronate 2-epimerase of Pseudomonas aeruginosa (strain ATCC 15692 / DSM 22644 / CIP 104116 / JCM 14847 / LMG 12228 / 1C / PRS 101 / PAO1).